Here is a 66-residue protein sequence, read N- to C-terminus: Large ribosomal subunit protein bL35 (66 aa).

It belongs to the bacterial ribosomal protein bL35 family.

This chain is Large ribosomal subunit protein bL35, found in Leptospira biflexa serovar Patoc (strain Patoc 1 / Ames).